The chain runs to 196 residues: Imidazoleglycerol-phosphate dehydratase (196 aa).

This sequence belongs to the imidazoleglycerol-phosphate dehydratase family.

The protein localises to the cytoplasm. It carries out the reaction D-erythro-1-(imidazol-4-yl)glycerol 3-phosphate = 3-(imidazol-4-yl)-2-oxopropyl phosphate + H2O. Its pathway is amino-acid biosynthesis; L-histidine biosynthesis; L-histidine from 5-phospho-alpha-D-ribose 1-diphosphate: step 6/9. This Clostridium botulinum (strain ATCC 19397 / Type A) protein is Imidazoleglycerol-phosphate dehydratase.